The chain runs to 3722 residues: Vitelline envelope sperm lysin receptor (3722 aa).

The signal sequence occupies residues Met-1–Ala-24. Over Phe-25–Gln-3698 the chain is Extracellular. 2 disulfide bridges follow: Cys-43/Cys-141 and Cys-72/Cys-104. The VERL 1 repeat unit spans residues Met-77 to Lys-155. N-linked (GlcNAc...) asparagine glycosylation is found at Asn-115, Asn-122, and Asn-142. Residues Ser-146–Ser-169 form a disordered region. A compositionally biased stretch (polar residues) spans Ser-157–Ser-169. Asn-171 carries an N-linked (GlcNAc...) asparagine glycan. Cystine bridges form between Cys-182–Cys-280 and Cys-211–Cys-243. Residues Val-216–Ser-293 form a VERL 2 repeat. An N-linked (GlcNAc...) asparagine glycan is attached at Asn-254. The disordered stretch occupies residues Gln-279–Gln-335. Residues Pro-291–Pro-312 show a composition bias toward low complexity. Residues Tyr-315–Gln-335 show a composition bias toward polar residues. N-linked (GlcNAc...) asparagine glycans are attached at residues Asn-334 and Asn-373. Cystine bridges form between Cys-345–Cys-443 and Cys-374–Cys-406. The stretch at Val-379–Glu-455 is one VERL 3 repeat. Residues Asn-417, Asn-438, Asn-487, Asn-501, Asn-526, Asn-570, Asn-591, Asn-640, Asn-654, Asn-679, Asn-723, Asn-744, Asn-793, Asn-807, Asn-832, Asn-876, Asn-897, Asn-946, Asn-960, Asn-985, Asn-1029, Asn-1050, Asn-1099, Asn-1113, Asn-1138, Asn-1182, Asn-1203, Asn-1252, Asn-1266, Asn-1291, Asn-1335, Asn-1356, Asn-1405, Asn-1419, Asn-1443, and Asn-1487 are each glycosylated (N-linked (GlcNAc...) asparagine). The tract at residues Cys-443 to Gln-488 is disordered. The segment covering Gly-457–Gln-488 has biased composition (polar residues). The stretch at Val-532–Glu-608 is one VERL 4 repeat. Residues Val-603–Gln-641 form a disordered region. The span at Gly-610 to Gln-641 shows a compositional bias: polar residues. The VERL 5 repeat unit spans residues Val-685 to Glu-761. The segment at Val-756 to Gln-794 is disordered. The span at Gly-763 to Gln-794 shows a compositional bias: polar residues. One copy of the VERL 6 repeat lies at Val-838 to Glu-914. Positions Val-909–Gln-947 are disordered. Residues Gly-916 to Gln-947 are compositionally biased toward polar residues. One copy of the VERL 7 repeat lies at Val-991–Glu-1067. The disordered stretch occupies residues Val-1062–Gln-1100. Residues Gly-1069–Gln-1100 show a composition bias toward polar residues. A VERL 8 repeat occupies Val-1144 to Glu-1220. Residues Val-1215 to Gln-1253 form a disordered region. The segment covering Gly-1222–Gln-1253 has biased composition (polar residues). The stretch at Val-1297–Glu-1373 is one VERL 9 repeat. The interval Val-1368–Gln-1406 is disordered. A compositionally biased stretch (polar residues) spans Gly-1375–Gln-1406. One copy of the VERL 10 repeat lies at Val-1449 to Glu-1525. Residues Pro-1519–His-1556 are disordered. Positions Gly-1527 to Ala-1543 are enriched in polar residues. N-linked (GlcNAc...) asparagine glycosylation is found at Asn-1557, Asn-1571, Asn-1596, Asn-1640, Asn-1661, Asn-1710, Asn-1724, Asn-1749, Asn-1793, Asn-1814, Asn-1863, Asn-1877, Asn-1902, Asn-1946, Asn-1967, Asn-2016, Asn-2030, Asn-2055, Asn-2099, Asn-2120, Asn-2169, Asn-2183, Asn-2208, Asn-2252, Asn-2273, Asn-2322, Asn-2336, Asn-2361, Asn-2405, Asn-2426, Asn-2475, Asn-2489, Asn-2514, Asn-2558, Asn-2579, Asn-2628, Asn-2642, Asn-2667, Asn-2711, Asn-2732, Asn-2781, Asn-2795, Asn-2820, Asn-2864, Asn-2885, Asn-2934, Asn-2948, Asn-2973, Asn-3017, Asn-3038, Asn-3087, Asn-3101, Asn-3126, Asn-3170, Asn-3191, Asn-3229, Asn-3243, Asn-3268, Asn-3312, and Asn-3333. The stretch at Val-1602–Glu-1678 is one VERL 11 repeat. A disordered region spans residues Pro-1672–Gln-1711. Polar residues predominate over residues Gly-1680 to Gln-1711. The VERL 12 repeat unit spans residues Val-1755–Glu-1831. Residues Val-1826–Gln-1864 are disordered. Residues Gly-1833 to Gln-1864 show a composition bias toward polar residues. A VERL 13 repeat occupies Val-1908–Glu-1984. The interval Val-1979–Gln-2017 is disordered. The segment covering Gly-1986 to Gln-2017 has biased composition (polar residues). The VERL 14 repeat unit spans residues Val-2061 to Glu-2137. Residues Val-2132–Gln-2170 form a disordered region. The segment covering Gly-2139–Gln-2170 has biased composition (polar residues). The stretch at Val-2214–Glu-2290 is one VERL 15 repeat. The tract at residues Val-2285–Gln-2323 is disordered. A compositionally biased stretch (polar residues) spans Gly-2292–Gln-2323. The VERL 16 repeat unit spans residues Val-2367–Glu-2443. Residues Val-2438–Gln-2476 form a disordered region. Residues Gly-2445–Gln-2476 are compositionally biased toward polar residues. The stretch at Val-2520–Glu-2596 is one VERL 17 repeat. Positions Pro-2590 to Gln-2629 are disordered. A compositionally biased stretch (polar residues) spans Gly-2598–Gln-2629. The VERL 18 repeat unit spans residues Val-2673–Glu-2749. The interval Val-2744–Gln-2782 is disordered. Polar residues predominate over residues Gly-2751 to Gln-2782. One copy of the VERL 19 repeat lies at Val-2826–Glu-2902. Positions Val-2897–Gln-2935 are disordered. A compositionally biased stretch (polar residues) spans Gly-2904–Gln-2935. A VERL 20 repeat occupies Val-2979–Glu-3055. The segment at Val-3050–Gln-3088 is disordered. A compositionally biased stretch (polar residues) spans Gly-3057–Gln-3088. The stretch at Val-3132 to Glu-3208 is one VERL 21 repeat. The tract at residues Pro-3205 to Gln-3230 is disordered. Residues Tyr-3210–Gln-3230 show a composition bias toward polar residues. The stretch at Val-3274 to Ala-3351 is one VERL 22 repeat. The tract at residues Val-3345–Glu-3407 is disordered. The segment covering Ser-3352–Gly-3375 has biased composition (polar residues). N-linked (GlcNAc...) asparagine glycosylation is found at Asn-3388, Asn-3401, Asn-3449, Asn-3456, Asn-3559, and Asn-3650. In terms of domain architecture, ZP spans Asp-3408–Arg-3670. Residues Val-3699–Val-3719 traverse the membrane as a helical segment. The Cytoplasmic segment spans residues Asn-3720–Asn-3722.

May form disulfide-linked homodimers. Interacts (via VERL repeats) with sperm lysin. Each VERL chain can bind numerous lysin molecules. Post-translationally, N-glycosylated. About half of the glycoprotein mass corresponds to carbohydrate chains. N-glycosylation is not required for lysin binding. In terms of processing, O-glycosylated. O-glycosylation is not required for lysin binding.

Its subcellular location is the cell membrane. It localises to the secreted. The protein localises to the extracellular space. The protein resides in the extracellular matrix. Functionally, structural component of the egg vitelline envelope; forms long filaments. Functions as a species-specific receptor for the sperm protein lysin; prevents fertilization by sperm from other species. Each VERL chain can bind multiple copies of the sperm protein lysin; this creates a 3 um hole in the egg vitelline envelope through which the sperm passes. This is Vitelline envelope sperm lysin receptor from Haliotis rufescens (California red abalone).